A 372-amino-acid chain; its full sequence is DNA replication and repair protein RecF (372 aa).

30–37 (GDNGQGKT) contributes to the ATP binding site.

It belongs to the RecF family.

Its subcellular location is the cytoplasm. In terms of biological role, the RecF protein is involved in DNA metabolism; it is required for DNA replication and normal SOS inducibility. RecF binds preferentially to single-stranded, linear DNA. It also seems to bind ATP. The polypeptide is DNA replication and repair protein RecF (Ruminiclostridium cellulolyticum (strain ATCC 35319 / DSM 5812 / JCM 6584 / H10) (Clostridium cellulolyticum)).